Consider the following 375-residue polypeptide: ATP-sensitive inward rectifier potassium channel 15 (375 aa).

At 1–60 (MDAIHLGMSSAPLVKHTNGVGLKAHRPRVMSKSGHSNVRIDKVDGIYLLYLQDLWTTVID) the chain is on the cytoplasmic side. The helical transmembrane segment at 61–87 (MKWRYKLTLFAATFVMTWFLFGVVYYA) threads the bilayer. The Extracellular portion of the chain corresponds to 88–113 (IAFIHGDLQLGESNSNHTPCIMKVDS). Positions 114-130 (LTGAFLFSLESQTTIGY) form an intramembrane region, helical; Pore-forming. Residues 127 to 132 (TIGYGV) carry the Selectivity filter motif. At 131-139 (GVRSITEEC) the chain is on the extracellular side. The chain crosses the membrane as a helical span at residues 140–165 (PHAIFLLVAQLVITTLIEIFITGTFL). Residues 166 to 375 (AKIARPKKRA…RSLLLQQSNV (210 aa)) are Cytoplasmic-facing.

Belongs to the inward rectifier-type potassium channel (TC 1.A.2.1) family. KCNJ15 subfamily. As to quaternary structure, can form heteromultimeric channels with Kir5.1/KCNJ16. Interacts with PATJ. Expressed in the proximal segment of the nephron.

The protein localises to the membrane. The protein resides in the cell membrane. The catalysed reaction is K(+)(in) = K(+)(out). Channel activity is regulated by variations of cytosolic pH; reversibly inhibited by acidic pH values. Inhibited by Ba(2+) and Cs(+) in a voltage-dependent manner. In terms of biological role, inward rectifier potassium channels are characterized by a greater tendency to allow potassium to flow into the cell rather than out of it. Their voltage dependence is regulated by the concentration of extracellular potassium; as external potassium is raised, the voltage range of the channel opening shifts to more positive voltages. The inward rectification is mainly due to the blockage of outward current by internal magnesium. The protein is ATP-sensitive inward rectifier potassium channel 15 (Kcnj15) of Mus musculus (Mouse).